Here is a 590-residue protein sequence, read N- to C-terminus: Aspartate--tRNA(Asp/Asn) ligase (590 aa).

Glutamate 170 serves as a coordination point for L-aspartate. Positions 194 to 197 are aspartate; the sequence is QLFK. Position 216 (arginine 216) interacts with L-aspartate. ATP is bound by residues 216–218 and glutamine 225; that span reads RDE. Histidine 448 contacts L-aspartate. Glutamate 482 contacts ATP. Arginine 489 serves as a coordination point for L-aspartate. 534–537 contributes to the ATP binding site; it reads GWDR. The segment at 559–590 is disordered; that stretch reads GGVDPLTEAPAPITAQQRKESGIDAKPGKDGA. Positions 575-590 are enriched in basic and acidic residues; the sequence is QRKESGIDAKPGKDGA.

The protein belongs to the class-II aminoacyl-tRNA synthetase family. Type 1 subfamily. In terms of assembly, homodimer.

It is found in the cytoplasm. The enzyme catalyses tRNA(Asx) + L-aspartate + ATP = L-aspartyl-tRNA(Asx) + AMP + diphosphate. In terms of biological role, aspartyl-tRNA synthetase with relaxed tRNA specificity since it is able to aspartylate not only its cognate tRNA(Asp) but also tRNA(Asn). Reaction proceeds in two steps: L-aspartate is first activated by ATP to form Asp-AMP and then transferred to the acceptor end of tRNA(Asp/Asn). This chain is Aspartate--tRNA(Asp/Asn) ligase, found in Mycolicibacterium gilvum (strain PYR-GCK) (Mycobacterium gilvum (strain PYR-GCK)).